A 259-amino-acid chain; its full sequence is uncharacterized protein (259 aa).

The first 28 residues, 1–28 (MNIKRRLKYLTSCLLVSAFFWINSSAWA), serve as a signal peptide directing secretion. 2 helical membrane-spanning segments follow: residues 32-52 (EIPP…IYVA) and 191-211 (WGFL…GIFT).

It localises to the cell membrane. This is an uncharacterized protein from Coxiella burnetii (strain RSA 493 / Nine Mile phase I).